A 78-amino-acid polypeptide reads, in one-letter code: Neurogranin (78 aa).

Met1 carries the N-acetylmethionine modification. In terms of domain architecture, IQ spans 26 to 49 (ANAAAAKIQASFRGHMARKKIKSG). At Ser36 the chain carries Phosphoserine; by PHK and PKC. A disordered region spans residues 38–78 (RGHMARKKIKSGERGRKGPGPGGPGGAGGARGGAGGGPSGD). The Collagen-like domain maps to 50 to 78 (ERGRKGPGPGGPGGAGGARGGAGGGPSGD). Over residues 55 to 78 (GPGPGGPGGAGGARGGAGGGPSGD) the composition is skewed to gly residues. Arg68 is subject to Citrulline; partial. Residue Arg68 is modified to Omega-N-methylarginine.

The protein belongs to the neurogranin family. Post-translationally, the N-terminus is blocked. Phosphorylated at Ser-36 by PHK and PKC. Phosphorylation prevents interaction with Calmodulin and interrupts several learning- and memory-associated functions. Is highly enriched in brain. Accumulates postsynaptically in dendritic spines of neostriatal neurons.

Functionally, acts as a 'third messenger' substrate of protein kinase C-mediated molecular cascades during synaptic development and remodeling. Binds to calmodulin in the absence of calcium. This chain is Neurogranin (NRGN), found in Bos taurus (Bovine).